The chain runs to 229 residues: MIDHTHLRLFQFCDSQFPTGAFSHSFGLETYIQRNIIHDDHTFIAWLKMFLQEQLTYSDGLAMRLVYDALENDDTQKVLHIDKLMFVQNLPKETRVGAKQMGTRIVKLALELYNSPWIAWYHQQMQDKKAKLNPAICFTMLGHYLGVDIETIIDYYLYQNVSSLTQNAVRAIPLGQTAGQKIVTHMIPYIEETRKQIFELKEADFGMTAPGLELNQMAHENVNVRIFIS.

This sequence belongs to the UreF family. As to quaternary structure, ureD, UreF and UreG form a complex that acts as a GTP-hydrolysis-dependent molecular chaperone, activating the urease apoprotein by helping to assemble the nickel containing metallocenter of UreC. The UreE protein probably delivers the nickel.

Its subcellular location is the cytoplasm. Functionally, required for maturation of urease via the functional incorporation of the urease nickel metallocenter. The protein is Urease accessory protein UreF of Staphylococcus aureus (strain bovine RF122 / ET3-1).